The following is a 497-amino-acid chain: 3-ketoacyl-CoA synthase 6 (497 aa).

2 helical membrane-spanning segments follow: residues 25-45 and 64-84; these read LVNHFLSFLLIPIMAIVAVEL and LVQVLCSSFFVIFISTVYFMS. An FAE domain is found at 81-370; that stretch reads YFMSKPRTIY…FLTSLIGRKI (290 aa). Active-site residues include C225, H304, H388, H392, H421, and N425.

This sequence belongs to the thiolase-like superfamily. Chalcone/stilbene synthases family. In epidermal cells of aerial tissues and in the tapetum of anthers near maturity. Expressed in siliques, flowers and leaves.

It is found in the endoplasmic reticulum membrane. It catalyses the reaction a very-long-chain acyl-CoA + malonyl-CoA + H(+) = a very-long-chain 3-oxoacyl-CoA + CO2 + CoA. Its pathway is lipid metabolism; fatty acid biosynthesis. Strongly inhibited by metazachlor and mefluidide. Functionally, contributes to cuticular wax and suberin biosynthesis. Involved in both decarbonylation and acyl-reduction wax synthesis pathways. Required for elongation of C24 fatty acids, an essential step of the cuticular wax production. Major condensing enzyme for stem wax and pollen coat lipid biosynthesis. The polypeptide is 3-ketoacyl-CoA synthase 6 (Arabidopsis thaliana (Mouse-ear cress)).